A 1014-amino-acid polypeptide reads, in one-letter code: Protein argonaute 2 (1014 aa).

Residues 1 to 15 are compositionally biased toward basic and acidic residues; the sequence is MERGGYRGGRGDGRG. The tract at residues 1-137 is disordered; that stretch reads MERGGYRGGR…PSTSTTVVSE (137 aa). 2 stretches are compositionally biased toward gly residues: residues 18–29 and 49–58; these read GRGYGGGGGGGE and RGGGNRGQGR. Over residues 83–104 the composition is skewed to low complexity; sequence QFQQPRPQVAPQPSQAPASYAG. A compositionally biased stretch (gly residues) spans 105-114; the sequence is SVGGVAGRGA. Low complexity predominate over residues 121–137; it reads VPSDSASPSTSTTVVSE. Residues 369-482 form the PAZ domain; the sequence is SVIEYLKLYF…VPMEFCDLVE (114 aa). The Piwi domain maps to 666 to 965; sequence LVLCAMSRKD…VAFRGRMYHE (300 aa). Interaction with guide RNA regions lie at residues 857–858, 900–908, and 937–959; these read KR, HHGGIGTSK, and FTRCTKPVSLVPPVYYADMVAFR.

Belongs to the argonaute family. Ago subfamily. In terms of assembly, interacts with NERD.

Functionally, involved in RNA-mediated post-transcriptional gene silencing (PTGS). Main component of the RNA-induced silencing complex (RISC) that binds to a short guide RNA such as microRNA (miRNA) or small interfering RNA (siRNA). RISC uses the mature miRNA or siRNA as a guide for slicer-directed cleavage of homologous mRNAs to repress gene expression. Associates mainly with siRNAs of 21 nucleotide in length and preferentially recruits small RNAs with a 5' terminal adenosine. Probably involved in antiviral RNA silencing. Associates with siRNA derived from cucumber mosaic virus (CMV). Targeted by turnip yellows virus (TuYV) protein P0 (via F-box-like domain) for probable proteasome degradation and thereby inactivating AGO2 function in RNA silencing. Required to direct NERD-dependent DNA methylation and silencing. The polypeptide is Protein argonaute 2 (AGO2) (Arabidopsis thaliana (Mouse-ear cress)).